The following is a 130-amino-acid chain: Histone H2A type 1 (130 aa).

Residues 1–22 (MSGRGKQGGKARAKAKTRSSRA) are disordered. An N-acetylserine modification is found at Ser-2. Residue Ser-2 is modified to Phosphoserine; by RPS6KA5. At Arg-4 the chain carries Citrulline; alternate. Arg-4 bears the Symmetric dimethylarginine; by PRMT5; alternate mark. Position 6 is an N6-(2-hydroxyisobutyryl)lysine (Lys-6). Over residues 7–19 (QGGKARAKAKTRS) the composition is skewed to basic residues. At Lys-10 the chain carries N6-(2-hydroxyisobutyryl)lysine; alternate. At Lys-10 the chain carries N6-lactoyllysine; alternate. The residue at position 10 (Lys-10) is an N6-succinyllysine; alternate. Residues Lys-14 and Lys-16 each participate in a glycyl lysine isopeptide (Lys-Gly) (interchain with G-Cter in ubiquitin) cross-link. Lys-37 is subject to N6-(2-hydroxyisobutyryl)lysine; alternate. N6-(beta-hydroxybutyryl)lysine; alternate is present on Lys-37. Position 37 is an N6-crotonyllysine; alternate (Lys-37). Lys-75 and Lys-76 each carry N6-(2-hydroxyisobutyryl)lysine. Lys-96 is subject to N6-(2-hydroxyisobutyryl)lysine; alternate. Residue Lys-96 is modified to N6-succinyllysine; alternate. Position 96 is an N6-glutaryllysine; alternate (Lys-96). An N6-glutaryllysine modification is found at Lys-100. Position 105 is an N5-methylglutamine (Gln-105). An N6-(2-hydroxyisobutyryl)lysine; alternate modification is found at Lys-119. N6-crotonyllysine; alternate occurs at positions 119 and 120. N6-glutaryllysine; alternate is present on residues Lys-119 and Lys-120. Lys-120 is covalently cross-linked (Glycyl lysine isopeptide (Lys-Gly) (interchain with G-Cter in ubiquitin); alternate). Residue Thr-121 is modified to Phosphothreonine; by DCAF1. At Lys-126 the chain carries N6-crotonyllysine; alternate. N6-glutaryllysine; alternate is present on Lys-126.

Belongs to the histone H2A family. As to quaternary structure, the nucleosome is a histone octamer containing two molecules each of H2A, H2B, H3 and H4 assembled in one H3-H4 heterotetramer and two H2A-H2B heterodimers. The octamer wraps approximately 147 bp of DNA. Interacts with VRK1; the interaction is mediated by the nucleosome acidic patch, a cluster of negatively charged residues of H2A and H2B forming a cleft within the nucleosome core. In terms of processing, deiminated on Arg-4 in granulocytes upon calcium entry. Monoubiquitination of Lys-120 (H2AK119Ub) by RING1, TRIM37 and RNF2/RING2 complex gives a specific tag for epigenetic transcriptional repression and participates in X chromosome inactivation of female mammals. It is involved in the initiation of both imprinted and random X inactivation. Ubiquitinated H2A is enriched in inactive X chromosome chromatin. Ubiquitination of H2A functions downstream of methylation of 'Lys-27' of histone H3 (H3K27me). H2AK119Ub by RNF2/RING2 can also be induced by ultraviolet and may be involved in DNA repair. Following DNA double-strand breaks (DSBs), it is ubiquitinated through 'Lys-63' linkage of ubiquitin moieties by the E2 ligase UBE2N and the E3 ligases RNF8 and RNF168, leading to the recruitment of repair proteins to sites of DNA damage. Ubiquitination at Lys-14 and Lys-16 (H2AK13Ub and H2AK15Ub, respectively) in response to DNA damage is initiated by RNF168 that mediates monoubiquitination at these 2 sites, and 'Lys-63'-linked ubiquitin are then conjugated to monoubiquitin; RNF8 is able to extend 'Lys-63'-linked ubiquitin chains in vitro. H2AK119Ub and ionizing radiation-induced 'Lys-63'-linked ubiquitination (H2AK13Ub and H2AK15Ub) are distinct events. Post-translationally, phosphorylation on Ser-2 (H2AS1ph) is enhanced during mitosis. Phosphorylation on Ser-2 by RPS6KA5/MSK1 directly represses transcription. Acetylation of H3 inhibits Ser-2 phosphorylation by RPS6KA5/MSK1. Phosphorylation at Thr-121 (H2AT120ph) by DCAF1 is present in the regulatory region of many tumor suppresor genes and down-regulates their transcription. In terms of processing, symmetric dimethylation on Arg-4 by the PRDM1/PRMT5 complex may play a crucial role in the germ-cell lineage. Glutamine methylation at Gln-105 (H2AQ104me) by FBL is specifically dedicated to polymerase I. It is present at 35S ribosomal DNA locus and impairs binding of the FACT complex. Post-translationally, crotonylation (Kcr) is specifically present in male germ cells and marks testis-specific genes in post-meiotic cells, including X-linked genes that escape sex chromosome inactivation in haploid cells. Crotonylation marks active promoters and enhancers and confers resistance to transcriptional repressors. It is also associated with post-meiotically activated genes on autosomes. In terms of processing, lactylated in macrophages by EP300/P300 by using lactoyl-CoA directly derived from endogenous or exogenous lactate, leading to stimulates gene transcription.

It localises to the nucleus. The protein localises to the chromosome. In terms of biological role, core component of nucleosome. Nucleosomes wrap and compact DNA into chromatin, limiting DNA accessibility to the cellular machineries which require DNA as a template. Histones thereby play a central role in transcription regulation, DNA repair, DNA replication and chromosomal stability. DNA accessibility is regulated via a complex set of post-translational modifications of histones, also called histone code, and nucleosome remodeling. In Bos taurus (Bovine), this protein is Histone H2A type 1.